Reading from the N-terminus, the 360-residue chain is Photosystem II protein D1 (360 aa).

Residues 1–28 are Cytoplasmic-facing; that stretch reads MTTTLQRRESANLWERFCNWVTSTDNRL. A helical membrane pass occupies residues 29–46; the sequence is YVGWFGVIMIPTLLAATI. At 47-117 the chain is on the lumenal side; that stretch reads CFVIAFIAAP…NGGPYQLIIF (71 aa). His118 is a binding site for chlorophyll a. A helical transmembrane segment spans residues 118–133; it reads HFLLGASCYMGRQWEL. Pheophytin a is bound by residues Tyr126 and Gln130. Topologically, residues 134–141 are cytoplasmic; the sequence is SYRLGMRP. The helical transmembrane segment at 142–156 threads the bilayer; that stretch reads WICVAYSAPLASAFA. Tyr147 is a pheophytin a binding site. Residues 157–196 lie on the Lumenal side of the membrane; the sequence is VFLIYPIGQGSFSDGMPLGISGTFNFMIVFQAEHNILMHP. [CaMn4O5] cluster is bound by residues Asp170 and Glu189. A helical membrane pass occupies residues 197 to 218; it reads FHQLGVAGVFGGALFCAMHGSL. Residue His198 coordinates chlorophyll a. Met214 lines the pheophytin a pocket. A quinone-binding positions include His215 and 264–265; that span reads SF. Fe cation is bound at residue His215. Residues 219–273 lie on the Cytoplasmic side of the membrane; the sequence is VTSSLIRETTETESANYGYKFGQEEETYNIVAAHGYFGRLIFQYASFNNSRSLHF. A Fe cation-binding site is contributed by His272. A helical membrane pass occupies residues 274-288; sequence FLAAWRVVGVWFAAL. Residues 289–360 are Lumenal-facing; it reads GISTMAFNLN…VAMIAPSING (72 aa). [CaMn4O5] cluster contacts are provided by His332, Glu333, Asp342, and Ala344. Positions 345 to 360 are excised as a propeptide; sequence SAESAPVAMIAPSING.

It belongs to the reaction center PufL/M/PsbA/D family. As to quaternary structure, PSII is composed of 1 copy each of membrane proteins PsbA, PsbB, PsbC, PsbD, PsbE, PsbF, PsbH, PsbI, PsbJ, PsbK, PsbL, PsbM, PsbT, PsbX, PsbY, PsbZ, Psb30/Ycf12, peripheral proteins PsbO, CyanoQ (PsbQ), PsbU, PsbV and a large number of cofactors. It forms dimeric complexes. The D1/D2 heterodimer binds P680, chlorophylls that are the primary electron donor of PSII, and subsequent electron acceptors. It shares a non-heme iron and each subunit binds pheophytin, quinone, additional chlorophylls, carotenoids and lipids. D1 provides most of the ligands for the Mn4-Ca-O5 cluster of the oxygen-evolving complex (OEC). There is also a Cl(-1) ion associated with D1 and D2, which is required for oxygen evolution. The PSII complex binds additional chlorophylls, carotenoids and specific lipids. serves as cofactor. Post-translationally, C-terminally processed by CtpA; processing is essential to allow assembly of the oxygen-evolving complex and thus photosynthetic growth. In terms of processing, tyr-161 forms a radical intermediate that is referred to as redox-active TyrZ, YZ or Y-Z.

It localises to the cellular thylakoid membrane. It catalyses the reaction 2 a plastoquinone + 4 hnu + 2 H2O = 2 a plastoquinol + O2. Photosystem II (PSII) is a light-driven water:plastoquinone oxidoreductase that uses light energy to abstract electrons from H(2)O, generating O(2) and a proton gradient subsequently used for ATP formation. It consists of a core antenna complex that captures photons, and an electron transfer chain that converts photonic excitation into a charge separation. The D1/D2 (PsbA/PsbD) reaction center heterodimer binds P680, the primary electron donor of PSII as well as several subsequent electron acceptors. This is Photosystem II protein D1 from Thermostichus vulcanus (Synechococcus vulcanus).